A 326-amino-acid chain; its full sequence is Fructose-1,6-bisphosphatase class 1 2 (326 aa).

Residues Glu84, Asp103, Leu105, and Asp106 each contribute to the Mg(2+) site. Residues 106-109, Asn198, and Lys262 each bind substrate; that span reads DGSS. A Mg(2+)-binding site is contributed by Glu268.

It belongs to the FBPase class 1 family. In terms of assembly, homotetramer. The cofactor is Mg(2+).

It is found in the cytoplasm. The enzyme catalyses beta-D-fructose 1,6-bisphosphate + H2O = beta-D-fructose 6-phosphate + phosphate. It functions in the pathway carbohydrate biosynthesis; gluconeogenesis. This is Fructose-1,6-bisphosphatase class 1 2 from Pseudoalteromonas translucida (strain TAC 125).